We begin with the raw amino-acid sequence, 1577 residues long: Probable serine/threonine-protein kinase gdt9 (1577 aa).

Residues 1-16 form the signal peptide; it reads MKTFLLIFLLICVCKG. At 17–966 the chain is on the extracellular side; it reads ITNITTPSIY…NNEDNHKKLV (950 aa). The helical transmembrane segment at 967-987 threads the bilayer; that stretch reads IALSVSIPVAALLVILCFGIF. Topologically, residues 988 to 1577 are cytoplasmic; sequence ICYNNNKKNK…SLVKIFKRFN (590 aa). The span at 998-1014 shows a compositional bias: basic and acidic residues; the sequence is NETKGKDIETNTDKKDD. Disordered stretches follow at residues 998-1019 and 1050-1128; these read NETKGKDIETNTDKKDDENENE and TLPP…FPTI. A compositionally biased stretch (polar residues) spans 1050 to 1082; the sequence is TLPPQSTISIDTSPSSENTTFTESLTPKKSATV. The span at 1091 to 1115 shows a compositional bias: low complexity; that stretch reads NSTNESTVSNSSSENNSDNNNNNNN. Positions 1290 to 1573 constitute a Protein kinase domain; sequence LDFDEICGQG…EIVFSLVKIF (284 aa). ATP-binding positions include 1296–1304 and K1317; that span reads CGQGTYGMV. D1436 functions as the Proton acceptor in the catalytic mechanism.

In the N-terminal section; belongs to the GDT family. This sequence in the C-terminal section; belongs to the protein kinase superfamily. TKL Ser/Thr protein kinase family.

It is found in the membrane. The catalysed reaction is L-seryl-[protein] + ATP = O-phospho-L-seryl-[protein] + ADP + H(+). The enzyme catalyses L-threonyl-[protein] + ATP = O-phospho-L-threonyl-[protein] + ADP + H(+). In Dictyostelium discoideum (Social amoeba), this protein is Probable serine/threonine-protein kinase gdt9 (gdt9).